Reading from the N-terminus, the 200-residue chain is Small ribosomal subunit protein uS4 (200 aa).

In terms of domain architecture, S4 RNA-binding spans 92 to 155 (SRLDAVVYSL…QKLNIIVESV (64 aa)).

This sequence belongs to the universal ribosomal protein uS4 family. Part of the 30S ribosomal subunit. Contacts protein S5. The interaction surface between S4 and S5 is involved in control of translational fidelity.

Functionally, one of the primary rRNA binding proteins, it binds directly to 16S rRNA where it nucleates assembly of the body of the 30S subunit. Its function is as follows. With S5 and S12 plays an important role in translational accuracy. This is Small ribosomal subunit protein uS4 from Staphylococcus aureus (strain JH9).